Reading from the N-terminus, the 526-residue chain is Outer capsid protein VP5 (526 aa).

Residues 1–42 (MGKVIRSLSRFGKKVGNALTSNTAKKIYSTIGKAAERFAESE) form an involved in membrane permeabilization region.

Belongs to the orbivirus VP5 family.

Its subcellular location is the virion. Functionally, VP5 protein is one of the two proteins (with VP2) which constitute the virus particle outer capsid. Acts as a membrane permeabilization protein that mediates release of viral particles from endosomal compartments into the cytoplasm. Permeabilization activity is probably negatively regulated by VP2 and is triggered by endosomal degradation of VP2 and exposure to low pH. The polypeptide is Outer capsid protein VP5 (Segment-6) (Bluetongue virus 1 (isolate Australia) (BTV 1)).